Reading from the N-terminus, the 473-residue chain is Bifunctional protein HldE (473 aa).

Residues 1-317 are ribokinase; that stretch reads MTHGLPHFTS…LQQALHPRAI (317 aa). Residue 195 to 198 participates in ATP binding; it reads NLAE. Asp-264 is a catalytic residue. The cytidylyltransferase stretch occupies residues 343–473; sequence MTNGCFDILH…SQIIDIIRKN (131 aa).

It in the N-terminal section; belongs to the carbohydrate kinase PfkB family. The protein in the C-terminal section; belongs to the cytidylyltransferase family. Homodimer.

The catalysed reaction is D-glycero-beta-D-manno-heptose 7-phosphate + ATP = D-glycero-beta-D-manno-heptose 1,7-bisphosphate + ADP + H(+). It carries out the reaction D-glycero-beta-D-manno-heptose 1-phosphate + ATP + H(+) = ADP-D-glycero-beta-D-manno-heptose + diphosphate. Its pathway is nucleotide-sugar biosynthesis; ADP-L-glycero-beta-D-manno-heptose biosynthesis; ADP-L-glycero-beta-D-manno-heptose from D-glycero-beta-D-manno-heptose 7-phosphate: step 1/4. It participates in nucleotide-sugar biosynthesis; ADP-L-glycero-beta-D-manno-heptose biosynthesis; ADP-L-glycero-beta-D-manno-heptose from D-glycero-beta-D-manno-heptose 7-phosphate: step 3/4. In terms of biological role, catalyzes the phosphorylation of D-glycero-D-manno-heptose 7-phosphate at the C-1 position to selectively form D-glycero-beta-D-manno-heptose-1,7-bisphosphate. Its function is as follows. Catalyzes the ADP transfer from ATP to D-glycero-beta-D-manno-heptose 1-phosphate, yielding ADP-D-glycero-beta-D-manno-heptose. This is Bifunctional protein HldE from Nitrosococcus oceani (strain ATCC 19707 / BCRC 17464 / JCM 30415 / NCIMB 11848 / C-107).